The primary structure comprises 833 residues: Transmembrane protease serine 7 (833 aa).

Residues 1-62 (MDKEKSDPSC…RAPFWNVQNK (62 aa)) lie on the Cytoplasmic side of the membrane. Residues 30 to 49 (KLPGRRLPRKPIGKARPRKQ) form a disordered region. A compositionally biased stretch (basic residues) spans 32–49 (PGRRLPRKPIGKARPRKQ). A helical; Signal-anchor for type II membrane protein membrane pass occupies residues 63–83 (IILFTVFLFILAVTAWTLLWL). At 84-829 (YISKTDSKDA…NFVPWIHKYV (746 aa)) the chain is on the extracellular side. Residues 92–220 (DAFYFVGMFR…DSVVLNAGLR (129 aa)) enclose the SEA domain. The N-linked (GlcNAc...) asparagine glycan is linked to Asn-196. 3 disulfides stabilise this stretch: Cys-233/Cys-259, Cys-285/Cys-312, and Cys-355/Cys-386. CUB domains lie at 233-350 (CSQY…FEVI) and 355-471 (CENT…YNIS). 2 N-linked (GlcNAc...) asparagine glycosylation sites follow: Asn-405 and Asn-469. 2 consecutive LDL-receptor class A domains span residues 473–509 (PCPAGSFRCSSGLCVPQAQRCDGVNDCFDESDELFCV) and 548–585 (PCTNRTFKCGNDICFRKQNAQCDGIVDCPDRSDEEGCG). Intrachain disulfides connect Cys-474–Cys-486, Cys-481–Cys-499, Cys-493–Cys-508, Cys-549–Cys-561, Cys-556–Cys-575, Cys-569–Cys-584, and Cys-621–Cys-637. Residues 596 to 830 (VVGGSDSQEG…FVPWIHKYVP (235 aa)) enclose the Peptidase S1 domain. Residues His-636 and Asp-684 each act as charge relay system in the active site. 3 disulfide bridges follow: Cys-720–Cys-786, Cys-752–Cys-765, and Cys-776–Cys-806. Ser-780 serves as the catalytic Charge relay system.

This sequence belongs to the peptidase S1 family. Forms a heterodimer with SERPINA5. N-glycosylated.

Its subcellular location is the cell membrane. Functionally, serine protease which preferentially hydrolyzes peptides with Arg at the P1 position. This is Transmembrane protease serine 7 from Rattus norvegicus (Rat).